The sequence spans 133 residues: Holo-[acyl-carrier-protein] synthase (133 aa).

The Mg(2+) site is built by Asp-8 and Glu-56.

This sequence belongs to the P-Pant transferase superfamily. AcpS family. It depends on Mg(2+) as a cofactor.

Its subcellular location is the cytoplasm. It catalyses the reaction apo-[ACP] + CoA = holo-[ACP] + adenosine 3',5'-bisphosphate + H(+). Its function is as follows. Transfers the 4'-phosphopantetheine moiety from coenzyme A to a Ser of acyl-carrier-protein. This Deinococcus radiodurans (strain ATCC 13939 / DSM 20539 / JCM 16871 / CCUG 27074 / LMG 4051 / NBRC 15346 / NCIMB 9279 / VKM B-1422 / R1) protein is Holo-[acyl-carrier-protein] synthase.